Here is a 129-residue protein sequence, read N- to C-terminus: Glycoprotein hormone alpha-2 (129 aa).

A signal peptide spans 1–23 (MPMASPQTLVLYLLVLAVTEAWG). 4 disulfide bridges follow: cysteine 31/cysteine 89, cysteine 48/cysteine 103, cysteine 57/cysteine 119, and cysteine 61/cysteine 121. Asparagine 37 and asparagine 81 each carry an N-linked (GlcNAc...) asparagine glycan.

This sequence belongs to the glycoprotein hormones subunit alpha family. In terms of assembly, heterodimer with GPHB5; this heterodimer interacts with thyroid-stimulating hormone receptor (TSHR), and hence stimulates cAMP production. Post-translationally, glycosylated. Found in a variety of tissues.

The protein resides in the secreted. Functionally, functions as a heterodimeric glycoprotein hormone with GPHB5 able to bind and activate the thyroid-stimulating hormone receptor (TSHR), leading to increased cAMP production. Plays a central role in controlling thyroid cell metabolism. In Homo sapiens (Human), this protein is Glycoprotein hormone alpha-2 (GPHA2).